The chain runs to 391 residues: Terminal nucleotidyltransferase 5C (391 aa).

The protein belongs to the TENT family. In terms of assembly, interacts with BCCIP and PABPC1; the interaction has no effect on TENT5C poly(A) polymerase function. Interacts with PLK4; this interaction leads to the TENT5C recruitment into the centrosome.

It is found in the nucleus. Its subcellular location is the cytoplasm. It localises to the cytoskeleton. The protein localises to the microtubule organizing center. The protein resides in the centrosome. It carries out the reaction RNA(n) + ATP = RNA(n)-3'-adenine ribonucleotide + diphosphate. Its function is as follows. Catalyzes the transfer of one adenosine molecule from an ATP to an mRNA poly(A) tail bearing a 3'-OH terminal group and enhances mRNA stability and gene expression. Can also elongate RNA oligos ending with uridine molecule, provided that the sequence is adenosine-rich. Mainly targets mRNAs encoding endoplasmic reticulum-targeted protein. The polypeptide is Terminal nucleotidyltransferase 5C (Macaca fascicularis (Crab-eating macaque)).